We begin with the raw amino-acid sequence, 173 residues long: NADH-ubiquinone oxidoreductase chain 6 (173 aa).

5 consecutive transmembrane segments (helical) span residues 1–21 (MTYF…AVAS), 27–47 (YGVV…LSLG), 48–68 (ASFV…VVFV), 87–107 (VIGY…IGGF), and 139–159 (WGAG…FVVL).

This sequence belongs to the complex I subunit 6 family.

The protein resides in the mitochondrion membrane. The enzyme catalyses a ubiquinone + NADH + 5 H(+)(in) = a ubiquinol + NAD(+) + 4 H(+)(out). Its function is as follows. Core subunit of the mitochondrial membrane respiratory chain NADH dehydrogenase (Complex I) that is believed to belong to the minimal assembly required for catalysis. Complex I functions in the transfer of electrons from NADH to the respiratory chain. The immediate electron acceptor for the enzyme is believed to be ubiquinone. The chain is NADH-ubiquinone oxidoreductase chain 6 (MT-ND6) from Brachyramphus brevirostris (Kittlitz's murrelet).